A 495-amino-acid chain; its full sequence is Carbohydrate oxidase (495 aa).

Positions 1–22 (MRSAFILALGLITASADALVTR) are cleaved as a signal peptide. One can recognise an FAD-binding PCMH-type domain in the interval 55 to 229 (LPYIPTAIAQ…AVWKLATFPA (175 aa)). A cross-link (6-(S-cysteinyl)-8alpha-(pros-histidyl)-FAD (His-Cys)) is located at residues 92-154 (HSYASFGFGG…YGRAISHGTC (63 aa)). N-linked (GlcNAc...) asparagine glycosylation is found at Asn-244 and Asn-417.

It belongs to the oxygen-dependent FAD-linked oxidoreductase family. FAD serves as cofactor. The FAD cofactor is bound via a bicovalent 6-S-cysteinyl, 8alpha-N1-histidyl FAD linkage.

The protein localises to the secreted. The enzyme catalyses beta-D-glucose + O2 = D-glucono-1,5-lactone + H2O2. It catalyses the reaction D-galactose + O2 = D-galactono-1,5-lactone + H2O2. The catalysed reaction is D-cellobiose + O2 = D-cellobiono-1,5-lactone + H2O2. It carries out the reaction beta-lactose + O2 = lactobiono-1,5-lactone + H2O2. The enzyme catalyses D-maltose + O2 = D-maltobiono-1,5-lactone + H2O2. It catalyses the reaction D-xylose + O2 = D-xylono-1,5-lactone + H2O2. Functionally, catalyzes the selective oxidation of C1 hydroxyl moieties on mono-, oligo- and polysaccharides with concomitant reduction of molecular oxygen to hydrogen peroxide. This results in the formation of the corresponding lactones, which typically undergo spontaneous hydrolysis. Carbohydrate oxidase is able to oxidize a variety of substrates including D-glucose, D-galactose, D-xylose, D-maltose, D-cellobiose, and lactose. In addition, among various oligosaccharides, the enzyme preferred tetrameric dextrins, indicating a favorable interaction of four linked glucose units with the substrate binding pocket. This Microdochium nivale (Pink snow mold) protein is Carbohydrate oxidase.